The following is a 209-amino-acid chain: Ribonuclease HII (209 aa).

The RNase H type-2 domain maps to 18 to 209 (GLVAGVDEVG…FKPVKALLER (192 aa)). A divalent metal cation-binding residues include Asp24, Glu25, and Asp116.

Belongs to the RNase HII family. Requires Mn(2+) as cofactor. Mg(2+) serves as cofactor.

It is found in the cytoplasm. It carries out the reaction Endonucleolytic cleavage to 5'-phosphomonoester.. Its function is as follows. Endonuclease that specifically degrades the RNA of RNA-DNA hybrids. The chain is Ribonuclease HII from Shewanella sp. (strain ANA-3).